The primary structure comprises 490 residues: Probable cytosol aminopeptidase (490 aa).

Positions 255 and 260 each coordinate Mn(2+). The active site involves Lys267. Positions 278, 337, and 339 each coordinate Mn(2+). Residue Arg341 is part of the active site.

The protein belongs to the peptidase M17 family. It depends on Mn(2+) as a cofactor.

Its subcellular location is the cytoplasm. The enzyme catalyses Release of an N-terminal amino acid, Xaa-|-Yaa-, in which Xaa is preferably Leu, but may be other amino acids including Pro although not Arg or Lys, and Yaa may be Pro. Amino acid amides and methyl esters are also readily hydrolyzed, but rates on arylamides are exceedingly low.. The catalysed reaction is Release of an N-terminal amino acid, preferentially leucine, but not glutamic or aspartic acids.. In terms of biological role, presumably involved in the processing and regular turnover of intracellular proteins. Catalyzes the removal of unsubstituted N-terminal amino acids from various peptides. The protein is Probable cytosol aminopeptidase of Gluconobacter oxydans (strain 621H) (Gluconobacter suboxydans).